Consider the following 469-residue polypeptide: Nuclear hormone receptor family member nhr-154 (469 aa).

Positions 80–159 (PSKCLVCRNP…VGMNPMAIQA (80 aa)) form a DNA-binding region, nuclear receptor. 2 NR C4-type zinc fingers span residues 83–103 (CLVC…CNGC) and 119–142 (CAKQ…CRAC). The NR LBD domain occupies 230–459 (LDSKPVLVVT…KMGTTFRKCI (230 aa)).

This sequence belongs to the nuclear hormone receptor family.

It is found in the nucleus. Orphan nuclear receptor. This chain is Nuclear hormone receptor family member nhr-154 (nhr-154), found in Caenorhabditis elegans.